The chain runs to 406 residues: NAC transcription factor NAM-B1 (406 aa).

Residues 1-11 (MGSPDSSSGSA) are compositionally biased toward polar residues. The segment at 1-40 (MGSPDSSSGSAQKPPRHQHQHQPPPPRRQGSAPELPPGFR) is disordered. The 170-residue stretch at 35-204 (LPPGFRFHPT…DWVLCRIYKK (170 aa)) folds into the NAC domain. A DNA-binding region spans residues 137–210 (VGVKKALVFY…IYKKTSKAAA (74 aa)).

It is found in the nucleus. Functionally, transcription factor of the NAC family associated with the grain protein content (GPC). Sequences of the 11 European varieties of H.vulgare tested belongs to the same haplotype while the sequence found in H.spontaneum, an ancestor of the cultivated H.vulgare which has a higher GPC, belongs to an other haplotype. The polypeptide is NAC transcription factor NAM-B1 (NAM-B1) (Hordeum vulgare subsp. spontaneum (Wild barley)).